We begin with the raw amino-acid sequence, 164 residues long: ATP synthase subunit b (164 aa).

Residues 6-26 (GELIGNFILITGSFILLLVLI) traverse the membrane as a helical segment.

The protein belongs to the ATPase B chain family. As to quaternary structure, F-type ATPases have 2 components, F(1) - the catalytic core - and F(0) - the membrane proton channel. F(1) has five subunits: alpha(3), beta(3), gamma(1), delta(1), epsilon(1). F(0) has three main subunits: a(1), b(2) and c(10-14). The alpha and beta chains form an alternating ring which encloses part of the gamma chain. F(1) is attached to F(0) by a central stalk formed by the gamma and epsilon chains, while a peripheral stalk is formed by the delta and b chains.

The protein localises to the cell membrane. Its function is as follows. F(1)F(0) ATP synthase produces ATP from ADP in the presence of a proton or sodium gradient. F-type ATPases consist of two structural domains, F(1) containing the extramembraneous catalytic core and F(0) containing the membrane proton channel, linked together by a central stalk and a peripheral stalk. During catalysis, ATP synthesis in the catalytic domain of F(1) is coupled via a rotary mechanism of the central stalk subunits to proton translocation. In terms of biological role, component of the F(0) channel, it forms part of the peripheral stalk, linking F(1) to F(0). The protein is ATP synthase subunit b of Streptococcus pneumoniae serotype 2 (strain D39 / NCTC 7466).